We begin with the raw amino-acid sequence, 828 residues long: Fibroblast growth factor receptor 4 (828 aa).

The signal sequence occupies residues M1–C31. Residues R32–D392 lie on the Extracellular side of the membrane. One can recognise an Ig-like C2-type 1 domain in the interval P33–S127. A disulfide bond links C67 and C112. An N-linked (GlcNAc...) asparagine glycan is attached at N70. A disordered region spans residues L132–A156. Residues G135–E147 are compositionally biased toward acidic residues. Ig-like C2-type domains follow at residues P169–T259 and P272–T372. C194 and C247 form a disulfide bridge. 4 N-linked (GlcNAc...) asparagine glycosylation sites follow: N244, N281, N313, and N345. An intrachain disulfide couples C294 to C356. A helical transmembrane segment spans residues I393–C413. Over R414–T828 the chain is Cytoplasmic. Positions L490–L777 constitute a Protein kinase domain. ATP is bound by residues L496–V504 and K526. The active-site Proton acceptor is the D635. 3 positions are modified to phosphotyrosine; by autocatalysis: Y665, Y666, and Y776.

Belongs to the protein kinase superfamily. Tyr protein kinase family. Fibroblast growth factor receptor subfamily. In terms of processing, ubiquitinated. Subject to proteasomal degradation when not fully glycosylated. Post-translationally, autophosphorylated. Binding of FGF family members together with heparan sulfate proteoglycan or heparin promotes receptor dimerization and autophosphorylation on tyrosine residues. Autophosphorylation occurs in trans between the two FGFR molecules present in the dimer.

It is found in the cell membrane. The protein localises to the endosome. The protein resides in the endoplasmic reticulum. The catalysed reaction is L-tyrosyl-[protein] + ATP = O-phospho-L-tyrosyl-[protein] + ADP + H(+). Present in an inactive conformation in the absence of bound ligand. Ligand binding leads to dimerization and activation by autophosphorylation on tyrosine residues. Its function is as follows. Tyrosine-protein kinase that acts as a cell-surface receptor for fibroblast growth factors and plays a role in the regulation of cell proliferation, differentiation and migration, and in regulation of lipid metabolism, bile acid biosynthesis, glucose uptake, vitamin D metabolism and phosphate homeostasis. Required for normal down-regulation of the expression of CYP7A1, the rate-limiting enzyme in bile acid synthesis, in response to FGF19. Phosphorylates PLCG1 and FRS2. Ligand binding leads to the activation of several signaling cascades. Activation of PLCG1 leads to the production of the cellular signaling molecules diacylglycerol and inositol 1,4,5-trisphosphate. Phosphorylation of FRS2 triggers recruitment of GRB2, GAB1, PIK3R1 and SOS1, and mediates activation of RAS, MAPK1/ERK2, MAPK3/ERK1 and the MAP kinase signaling pathway, as well as of the AKT1 signaling pathway. In Xenopus laevis (African clawed frog), this protein is Fibroblast growth factor receptor 4 (fgfr4).